The primary structure comprises 739 residues: Sulfate transporter (739 aa).

Residues 1 to 27 (MSSESKEQHNVSPRDSAEGNDSYPSGI) are disordered. A phosphoserine mark is found at serine 12 and serine 16. The next 2 membrane-spanning stretches (helical) occupy residues 112 to 132 (VMSG…YSLL) and 137 to 157 (PVYG…LGTS). 2 N-linked (GlcNAc...) asparagine glycosylation sites follow: asparagine 199 and asparagine 205. 2 helical membrane passes run 219 to 239 (IMVG…MGFF) and 242 to 262 (GFVS…GASF). Asparagine 357 carries N-linked (GlcNAc...) asparagine glycosylation. 4 consecutive transmembrane segments (helical) span residues 378–398 (LIPS…AITV), 420–440 (AIGF…SAAL), 455–475 (LSGV…APLF), and 524–544 (LLST…CVIL). One can recognise an STAS domain in the interval 568 to 719 (AYKNLQIKPG…YSVYEAMAFA (152 aa)).

This sequence belongs to the SLC26A/SulP transporter (TC 2.A.53) family. Post-translationally, N-glycosylated. As to expression, ubiquitously expressed.

Its subcellular location is the cell membrane. The protein localises to the apical cell membrane. It catalyses the reaction oxalate(in) + sulfate(out) = oxalate(out) + sulfate(in). The enzyme catalyses sulfate(out) + 2 chloride(in) = sulfate(in) + 2 chloride(out). The catalysed reaction is oxalate(out) + 2 chloride(in) = oxalate(in) + 2 chloride(out). It carries out the reaction bromide(in) + chloride(out) = bromide(out) + chloride(in). It catalyses the reaction nitrate(in) + chloride(out) = nitrate(out) + chloride(in). The enzyme catalyses iodide(in) + chloride(out) = iodide(out) + chloride(in). With respect to regulation, an extracellular acidic pH inhibits chloride-sulfate and chloride-oxalate exchange activity whereas an intracellular acidic pH activates chloride-sulfate exchange with no effect on chloride-oxalate exchange activity. In terms of biological role, sulfate transporter which mediates sulfate uptake into chondrocytes in order to maintain adequate sulfation of proteoglycans which is needed for cartilage development. Mediates electroneutral anion exchange of sulfate ions for oxalate ions and of sulfate and oxalate ions for chloride ions. Mediates exchange of sulfate and oxalate ions for hydroxyl ions and of chloride ions for bromide, iodide and nitrate ions. The coupling of sulfate transport to both hydroxyl and chloride ions likely serves to ensure transport at both acidic pH when most sulfate uptake is mediated by sulfate-hydroxide exchange and alkaline pH when most sulfate uptake is mediated by sulfate-chloride exchange. Essential for chondrocyte proliferation, differentiation and cell size expansion. The polypeptide is Sulfate transporter (SLC26A2) (Homo sapiens (Human)).